A 234-amino-acid chain; its full sequence is Ribose-5-phosphate isomerase A (234 aa).

Residues T28–T31, D83–D86, and K96–G99 each bind substrate. The active-site Proton acceptor is E105. K123 contacts substrate.

It belongs to the ribose 5-phosphate isomerase family. In terms of assembly, homodimer.

It carries out the reaction aldehydo-D-ribose 5-phosphate = D-ribulose 5-phosphate. Its pathway is carbohydrate degradation; pentose phosphate pathway; D-ribose 5-phosphate from D-ribulose 5-phosphate (non-oxidative stage): step 1/1. Functionally, catalyzes the reversible conversion of ribose-5-phosphate to ribulose 5-phosphate. This is Ribose-5-phosphate isomerase A from Bartonella quintana (strain Toulouse) (Rochalimaea quintana).